Reading from the N-terminus, the 276-residue chain is 3-keto-5-aminohexanoate cleavage enzyme (276 aa).

Position 14 (Glu14) interacts with (5S)-5-amino-3-oxohexanoate. Zn(2+) is bound by residues His46 and His48. (5S)-5-amino-3-oxohexanoate-binding residues include Ser82, Gly85, Thr106, and Asn108. Glu230 is a binding site for Zn(2+).

The protein belongs to the BKACE family. Kce subfamily. In terms of assembly, homotetramer. The cofactor is Zn(2+).

The catalysed reaction is (5S)-5-amino-3-oxohexanoate + acetyl-CoA = (3S)-3-aminobutanoyl-CoA + acetoacetate. Its pathway is amino-acid degradation; L-lysine degradation via acetate pathway. Functionally, involved in the anaerobic fermentation of lysine. Catalyzes the reversible reaction between 3-keto-5-aminohexanoate (KAH) and acetyl-CoA to form 3-aminobutyryl-CoA and acetoacetate. The reaction involves the deprotonation of KAH, the nucleophilic addition onto acetyl-CoA and the intramolecular transfer of the CoA moiety. In Cloacimonas acidaminovorans (strain Evry), this protein is 3-keto-5-aminohexanoate cleavage enzyme.